Consider the following 540-residue polypeptide: Chaperonin GroEL (540 aa).

ATP contacts are provided by residues 29–32 (TLGP), 86–90 (DGTTT), G413, 476–478 (NAA), and D492.

It belongs to the chaperonin (HSP60) family. Forms a cylinder of 14 subunits composed of two heptameric rings stacked back-to-back. Interacts with the co-chaperonin GroES.

It is found in the cytoplasm. The catalysed reaction is ATP + H2O + a folded polypeptide = ADP + phosphate + an unfolded polypeptide.. Its function is as follows. Together with its co-chaperonin GroES, plays an essential role in assisting protein folding. The GroEL-GroES system forms a nano-cage that allows encapsulation of the non-native substrate proteins and provides a physical environment optimized to promote and accelerate protein folding. This chain is Chaperonin GroEL, found in Streptococcus pneumoniae (strain ATCC 700669 / Spain 23F-1).